The sequence spans 99 residues: Nucleoid-associated protein EbfC (99 aa).

This sequence belongs to the YbaB/EbfC family. Homodimer.

Its subcellular location is the cytoplasm. The protein resides in the nucleoid. Its function is as follows. Binds to DNA and alters its conformation. May be involved in regulation of gene expression, nucleoid organization and DNA protection. This Borreliella burgdorferi (strain ZS7) (Borrelia burgdorferi) protein is Nucleoid-associated protein EbfC.